Reading from the N-terminus, the 247-residue chain is Uridylate kinase (247 aa).

16–19 (KLSG) contacts ATP. Residue G58 coordinates UMP. G59 and R63 together coordinate ATP. Residues D78 and 139-146 (TGNPFFTT) contribute to the UMP site. Residues T166, Y172, and D175 each coordinate ATP.

This sequence belongs to the UMP kinase family. As to quaternary structure, homohexamer.

Its subcellular location is the cytoplasm. It catalyses the reaction UMP + ATP = UDP + ADP. The protein operates within pyrimidine metabolism; CTP biosynthesis via de novo pathway; UDP from UMP (UMPK route): step 1/1. With respect to regulation, inhibited by UTP. In terms of biological role, catalyzes the reversible phosphorylation of UMP to UDP. The chain is Uridylate kinase from Xylella fastidiosa (strain 9a5c).